We begin with the raw amino-acid sequence, 338 residues long: Taste receptor type 2 member 39 (338 aa).

Residues Met1–Ser30 are Extracellular-facing. Residues Pro31–Ala51 traverse the membrane as a helical segment. The Cytoplasmic portion of the chain corresponds to Asn52 to Arg74. Residues Ile75 to Thr95 traverse the membrane as a helical segment. Over Ile96–Ser116 the chain is Extracellular. Residues Phe117–Val137 form a helical membrane-spanning segment. The Cytoplasmic portion of the chain corresponds to Lys138 to Gly156. Residues Leu157–Ile177 traverse the membrane as a helical segment. The Extracellular segment spans residues Asn178–Ser205. Asn194 carries N-linked (GlcNAc...) asparagine glycosylation. A helical transmembrane segment spans residues Val206–Leu226. At Ala227–Lys262 the chain is on the cytoplasmic side. Residues Ala263–Ser283 traverse the membrane as a helical segment. At Asn284–Leu291 the chain is on the extracellular side. Residues Trp292–Ile312 traverse the membrane as a helical segment. Residues Lys313–Leu338 lie on the Cytoplasmic side of the membrane.

Belongs to the G-protein coupled receptor T2R family.

It is found in the membrane. Functionally, receptor that may play a role in the perception of bitterness and is gustducin-linked. May play a role in sensing the chemical composition of the gastrointestinal content. The activity of this receptor may stimulate alpha gustducin, mediate PLC-beta-2 activation and lead to the gating of TRPM5. The protein is Taste receptor type 2 member 39 (TAS2R39) of Papio hamadryas (Hamadryas baboon).